The chain runs to 131 residues: Predicted GPI-anchored protein 26 (131 aa).

The N-terminal stretch at 1 to 18 (MHFSKIIAGSALSSVALA) is a signal peptide. N-linked (GlcNAc...) asparagine glycans are attached at residues asparagine 22 and asparagine 104. The GPI-anchor amidated glycine moiety is linked to residue glycine 110. A propeptide spans 111–131 (AGSKNVASALVGVVAIAAAMM) (removed in mature form).

Its subcellular location is the cell membrane. Its function is as follows. GPI-anchored protein involved in proper cell wall integrity. Does not seem to be directly involved in the synthesis of the cell wall. Required for normal virulence in a mouse model of disseminated candidiasis. This chain is Predicted GPI-anchored protein 26 (PGA26), found in Candida albicans (strain SC5314 / ATCC MYA-2876) (Yeast).